Here is a 73-residue protein sequence, read N- to C-terminus: Large ribosomal subunit protein bL31 (73 aa).

This sequence belongs to the bacterial ribosomal protein bL31 family. Type A subfamily. In terms of assembly, part of the 50S ribosomal subunit.

Binds the 23S rRNA. The polypeptide is Large ribosomal subunit protein bL31 (Rhizobium etli (strain CIAT 652)).